Here is a 586-residue protein sequence, read N- to C-terminus: MSKTLQSRKSLSGKLRRAANTRIVVEGNLALSIANDLLSALDVEPFNSEEDCISRSPKFGISPDQFRNSYLRAEIMSKYDSFSLGINTEAVAWEKFLAAEAECAKTNLRLYRPNYNEDFNFSLGETCIHMARRKIVKLLGDSVPFEAVLRHCRFSGGATTTNSRLYGHPSFKFALAQECTPRAVPYVQALKACTNMDLGITKVSPFNKAVTVPKNSKTDRCIAIEPGWNMFFQLGIGGVIREKLHLWNIDLNDQTINQVRAYSGSCSNELATVDLSSASDTISLALVELLLPPAWFKVLTDLRSRRGMLPDGRIITYEKISSMGNGFTFELESLIFAALARSLCELLNLQPSSVTVYGDDIILPSDACSSLIEVFSYVGFRTNEKKTFFDGPFRESCGKHYFMGVDVTPFYIRHRIVSPSDLILVLNQMYRWATIDGVWDPRVYPVYTKYRRLLPDILRRNVVPDGYGDGALVGSVLTSPFAENRGWVRRVPMIIDKKKDRVRDERGSYLYELWSLQQLECDSEFPFNGSLVVGTNDGVCTYRHRERVSTAISDSVGAYDIVWIPCSSRVLAPYGDFRRHEGSILK.

The 133-residue stretch at 259 to 391 (VRAYSGSCSN…TNEKKTFFDG (133 aa)) folds into the RdRp catalytic domain. Asp274, Asp359, and Asp360 together coordinate Mg(2+).

Homodimer; the replicase complex can dimerize. Part of the viral RNA-dependent RNA polymerase complex, the other subunits are the host ribosomal protein S1, EF-Tu and EF-Ts. S1 is needed for the initiation of genomic RNA (+)-strand replication. Requires Mg(2+) as cofactor.

The enzyme catalyses RNA(n) + a ribonucleoside 5'-triphosphate = RNA(n+1) + diphosphate. Its function is as follows. This is the catalytic subunit of the viral RNA-dependent RNA polymerase complex. This complex is involved in viral RNA replication that produces (+)-stranded genomes via a complementary, (-)-stranded intermediate. Binds RNA cooperatively with the host ribosomal protein S1. The chain is RNA-directed RNA polymerase subunit beta from Escherichia coli.